The primary structure comprises 88 residues: Small ribosomal subunit protein uS17 (88 aa).

It belongs to the universal ribosomal protein uS17 family. Part of the 30S ribosomal subunit.

In terms of biological role, one of the primary rRNA binding proteins, it binds specifically to the 5'-end of 16S ribosomal RNA. This Prochlorococcus marinus (strain MIT 9312) protein is Small ribosomal subunit protein uS17.